Here is a 329-residue protein sequence, read N- to C-terminus: Probable cell division protein WhiA (329 aa).

Positions 276–309 (SLEELGKVHEPPLTKDAIAGRIRRLLALADKTAR) form a DNA-binding region, H-T-H motif. A disordered region spans residues 308–329 (ARSNGEPTTLESLPVEMRDDRG). The segment covering 309-318 (RSNGEPTTLE) has biased composition (polar residues).

It belongs to the WhiA family.

Functionally, involved in cell division and chromosome segregation. The chain is Probable cell division protein WhiA from Cutibacterium acnes (strain DSM 16379 / KPA171202) (Propionibacterium acnes).